We begin with the raw amino-acid sequence, 1217 residues long: Genetic suppressor element 1 (1217 aa).

Residues 1-155 (MKGMSHEPKS…SRSSSGGRER (155 aa)) form a disordered region. Serine 10 bears the Phosphoserine mark. Residues 15 to 33 (MLSTATRTTATVNPLTPSP) show a composition bias toward polar residues. Low complexity-rich tracts occupy residues 43–63 (SPATSSALSAQAAPSSSFAAA) and 76–89 (GSSLSSESSPVSSP). Serine 84 and serine 95 each carry phosphoserine. Residues 103 to 114 (VPMGPIIVPPGG) are compositionally biased toward low complexity. Residue arginine 305 is modified to Asymmetric dimethylarginine. Residues 321–403 (ERMSGLSAER…REKELLAAKA (83 aa)) adopt a coiled-coil conformation. 2 disordered regions span residues 324–385 (SGLS…EREL) and 418–465 (RGHA…HHTV). Positions 331 to 385 (LQMDEELRREREREREREREREADREREKEREREREKEREQEKEREREKEREREL) are enriched in basic and acidic residues. Residue threonine 433 is modified to Phosphothreonine. The span at 450–465 (PVQHPLHPVPTPHHTV) shows a compositional bias: low complexity. Lysine 496 is modified (N6-acetyllysine). Disordered regions lie at residues 526–579 (HLDM…QLHA), 633–675 (KAEE…GPFL), and 699–720 (FGELSGPLKPGSPYRPPVPRAP). Composition is skewed to basic and acidic residues over residues 551 to 561 (NRHEPGGRDPP) and 633 to 645 (KAEEGPRKREPAP). The span at 711 to 720 (PYRPPVPRAP) shows a compositional bias: pro residues. Lysine 739 is subject to N6-acetyllysine. Serine 766 is subject to Phosphoserine. Disordered regions lie at residues 807–858 (KEEL…NNSP), 903–930 (ADSLTNSPRDSPAVSLSEPATQQASLDV), 948–981 (EPGKLEQVRPQELSRVQELAPASGEKARLSEAPG), and 1068–1122 (LQSS…PKRK). The segment covering 813–822 (QKRRKRRRML) has biased composition (basic residues). Serine 826 and serine 828 each carry phosphoserine. Composition is skewed to polar residues over residues 831–840 (TIQSKRQTPS) and 847–858 (TRYSPDEMNNSP). Serine 857 carries the phosphoserine modification. Threonine 907 is modified (phosphothreonine). At serine 909 the chain carries Phosphoserine. Polar residues predominate over residues 1068–1085 (LQSSSRAPPPQHNGQQEP). Acidic residues predominate over residues 1099-1117 (RDSEEEEEEDDEDGEDEEE). Serine 1101 bears the Phosphoserine mark. Residues 1127–1201 (EAVFEAYQEH…ELDHLRKCLA (75 aa)) adopt a coiled-coil conformation.

In terms of assembly, may be a component of a BHC histone deacetylase complex that contains HDAC1, HDAC2, HMG20B/BRAF35, KDM1A, RCOR1/CoREST, PHF21A/BHC80, ZMYM2, ZNF217, ZMYM3, GSE1 and GTF2I.

In Homo sapiens (Human), this protein is Genetic suppressor element 1 (GSE1).